The sequence spans 294 residues: Glycine--tRNA ligase alpha subunit (294 aa).

It belongs to the class-II aminoacyl-tRNA synthetase family. As to quaternary structure, tetramer of two alpha and two beta subunits.

The protein localises to the cytoplasm. The catalysed reaction is tRNA(Gly) + glycine + ATP = glycyl-tRNA(Gly) + AMP + diphosphate. This is Glycine--tRNA ligase alpha subunit from Polynucleobacter asymbioticus (strain DSM 18221 / CIP 109841 / QLW-P1DMWA-1) (Polynucleobacter necessarius subsp. asymbioticus).